A 346-amino-acid chain; its full sequence is E3 ubiquitin-protein ligase MARCHF9 (346 aa).

Disordered regions lie at residues 20-39 (GGGR…GGCG) and 47-92 (STRD…PGAL). The segment covering 63–75 (PRARGLAGDKEPR) has biased composition (basic and acidic residues). A compositionally biased stretch (pro residues) spans 77–90 (GPLPPPAPPLPPPG). Residues 102–162 (DSGLRTPQCR…ELCYFKYQVL (61 aa)) form an RING-CH-type zinc finger. The Zn(2+) site is built by Cys-110, Cys-113, Cys-126, Cys-128, His-136, Cys-139, Cys-152, and Cys-155. A run of 2 helical transmembrane segments spans residues 185–205 (IAAI…LIWS) and 219–239 (LFQI…GLII). Disordered stretches follow at residues 273–301 (DAGG…RPPA) and 326–346 (PPDA…VTTV). Positions 284 to 296 (PRNSRTGPTSGAT) are enriched in polar residues.

In terms of assembly, homodimer. Ubiquitously expressed.

Its subcellular location is the golgi apparatus membrane. The protein resides in the lysosome membrane. It catalyses the reaction S-ubiquitinyl-[E2 ubiquitin-conjugating enzyme]-L-cysteine + [acceptor protein]-L-lysine = [E2 ubiquitin-conjugating enzyme]-L-cysteine + N(6)-ubiquitinyl-[acceptor protein]-L-lysine.. The protein operates within protein modification; protein ubiquitination. Functionally, E3 ubiquitin-protein ligase that may mediate ubiquitination of MHC-I, CD4 and ICAM1, and promote their subsequent endocytosis and sorting to lysosomes via multivesicular bodies. E3 ubiquitin ligases accept ubiquitin from an E2 ubiquitin-conjugating enzyme in the form of a thioester and then directly transfer the ubiquitin to targeted substrates. This is E3 ubiquitin-protein ligase MARCHF9 from Homo sapiens (Human).